Reading from the N-terminus, the 422-residue chain is Mannosylglycerate synthase (422 aa).

GDP-alpha-D-mannose-binding positions include 7–11, Gln-66, Lys-77, Asp-101, and 101–102; these read PFKEE and DS. (R)-glycerate-binding positions include Arg-132 and 137–140; that span reads AMIT. 3 residues coordinate GDP-alpha-D-mannose: Leu-164, Asp-193, and Tyr-221.

Belongs to the glycosyltransferase 78 family.

The catalysed reaction is (R)-glycerate + GDP-alpha-D-mannose = (2R)-2-O-(alpha-D-mannosyl)-glycerate + GDP + H(+). It carries out the reaction GDP-alpha-D-glucose + (R)-glycerate = (2R)-2-O-(alpha-D-glucopyranosyl)-glycerate + GDP + H(+). With respect to regulation, activity is not dependent on divalent cations, but it is enhanced by Mg(2+). In terms of biological role, involved in the biosynthesis of the compatible solute alpha-D-mannosyl-glycerate (MG). Catalyzes the condensation of GDP-alpha-D-mannose (GDP-Man) with D-glycerate to produce alpha-D-mannosyl-glycerate. Can also use GDP-alpha-D-glucose (GDP-Glc) as sugar donor to produce alpha-D-glucopyranosyl-glycerate (GG). In Selaginella moellendorffii (Spikemoss), this protein is Mannosylglycerate synthase.